A 631-amino-acid polypeptide reads, in one-letter code: Phosphomethylpyrimidine synthase (631 aa).

Substrate contacts are provided by residues N239, M268, Y297, H333, 353–355 (SRG), 394–397 (DGLR), and E433. H437 is a Zn(2+) binding site. Y460 contributes to the substrate binding site. H501 provides a ligand contact to Zn(2+). Residues C581, C584, and C589 each coordinate [4Fe-4S] cluster.

Belongs to the ThiC family. As to quaternary structure, homodimer. It depends on [4Fe-4S] cluster as a cofactor.

It catalyses the reaction 5-amino-1-(5-phospho-beta-D-ribosyl)imidazole + S-adenosyl-L-methionine = 4-amino-2-methyl-5-(phosphooxymethyl)pyrimidine + CO + 5'-deoxyadenosine + formate + L-methionine + 3 H(+). It functions in the pathway cofactor biosynthesis; thiamine diphosphate biosynthesis. Catalyzes the synthesis of the hydroxymethylpyrimidine phosphate (HMP-P) moiety of thiamine from aminoimidazole ribotide (AIR) in a radical S-adenosyl-L-methionine (SAM)-dependent reaction. This Salmonella paratyphi A (strain AKU_12601) protein is Phosphomethylpyrimidine synthase.